The sequence spans 189 residues: uncharacterized protein (189 aa).

This is an uncharacterized protein from Danio rerio (Zebrafish).